Reading from the N-terminus, the 264-residue chain is Shikimate dehydrogenase (NADP(+)) (264 aa).

Shikimate-binding positions include 14-16 (SVS) and threonine 61. The active-site Proton acceptor is the lysine 65. Shikimate is bound by residues asparagine 85 and aspartate 99. Residues 122-126 (GAGGA), 145-150 (NRTVSR), and alanine 208 contribute to the NADP(+) site. Shikimate is bound at residue tyrosine 210. Glycine 231 is a binding site for NADP(+).

This sequence belongs to the shikimate dehydrogenase family. Homodimer.

The enzyme catalyses shikimate + NADP(+) = 3-dehydroshikimate + NADPH + H(+). It participates in metabolic intermediate biosynthesis; chorismate biosynthesis; chorismate from D-erythrose 4-phosphate and phosphoenolpyruvate: step 4/7. In terms of biological role, involved in the biosynthesis of the chorismate, which leads to the biosynthesis of aromatic amino acids. Catalyzes the reversible NADPH linked reduction of 3-dehydroshikimate (DHSA) to yield shikimate (SA). The protein is Shikimate dehydrogenase (NADP(+)) of Natronomonas pharaonis (strain ATCC 35678 / DSM 2160 / CIP 103997 / JCM 8858 / NBRC 14720 / NCIMB 2260 / Gabara) (Halobacterium pharaonis).